Consider the following 911-residue polypeptide: Bifunctional aspartokinase/homoserine dehydrogenase 1, chloroplastic (911 aa).

Residues 1–82 (MPVVSLAKVV…VENGHLPKGD (82 aa)) constitute a chloroplast transit peptide. Positions 83 to 331 (SWAVHKFGGT…VSEAVVLKTL (249 aa)) are aspartokinase. The interval 332 to 557 (SYQEAWEMSY…LSRTTLAVGI (226 aa)) is interface. ACT domains follow at residues 407–482 (VEGT…IIPN) and 488–565 (AVGQ…LIGG). A homoserine dehydrogenase region spans residues 558–911 (IGPGLIGGTL…RLAFYLGAPS (354 aa)). Ile-563 and Thr-644 together coordinate NAD(+). Residues Ile-563, Thr-644, and Lys-668 each coordinate NADP(+). Ile-563, Thr-644, and Lys-668 together coordinate NADPH. Residues Glu-695, Val-698, Ala-700, and Leu-702 each contribute to the Na(+) site. NADP(+) contacts are provided by Gly-753 and Glu-756. Glu-756 and Asp-767 together coordinate L-homoserine. Catalysis depends on Lys-771, which acts as the Proton donor. Gly-888 contributes to the NAD(+) binding site. Gly-888 lines the NADP(+) pocket. Residue Gly-888 participates in NADPH binding.

It in the N-terminal section; belongs to the aspartokinase family. In the C-terminal section; belongs to the homoserine dehydrogenase family. In terms of assembly, homo- or heterodimer. A metal cation serves as cofactor.

Its subcellular location is the plastid. It is found in the chloroplast. It catalyses the reaction L-homoserine + NADP(+) = L-aspartate 4-semialdehyde + NADPH + H(+). The catalysed reaction is L-homoserine + NAD(+) = L-aspartate 4-semialdehyde + NADH + H(+). The enzyme catalyses L-aspartate + ATP = 4-phospho-L-aspartate + ADP. It functions in the pathway amino-acid biosynthesis; L-lysine biosynthesis via DAP pathway; (S)-tetrahydrodipicolinate from L-aspartate: step 1/4. The protein operates within amino-acid biosynthesis; L-methionine biosynthesis via de novo pathway; L-homoserine from L-aspartate: step 1/3. Its pathway is amino-acid biosynthesis; L-methionine biosynthesis via de novo pathway; L-homoserine from L-aspartate: step 3/3. It participates in amino-acid biosynthesis; L-threonine biosynthesis; L-threonine from L-aspartate: step 1/5. It functions in the pathway amino-acid biosynthesis; L-threonine biosynthesis; L-threonine from L-aspartate: step 3/5. With respect to regulation, inhibition of aspartate kinase activity by threonine and leucine and 3-fold activation by cysteine, isoleucine, valine, serine and alanine at 2.5 mM. Partial inhibition of homoserine dehydrogenase activity by threonine and cysteine (14% of activity remaining at saturation with either amino acid). No synergy between the effectors for both activation or inhibition. Functionally, bifunctional aspartate kinase and homoserine dehydrogenase that catalyzes the first and the third steps toward the synthesis of lysine, methionine and threonine from aspartate. This is Bifunctional aspartokinase/homoserine dehydrogenase 1, chloroplastic from Arabidopsis thaliana (Mouse-ear cress).